Here is a 156-residue protein sequence, read N- to C-terminus: Small ribosomal subunit protein uS7 (156 aa).

Belongs to the universal ribosomal protein uS7 family. As to quaternary structure, part of the 30S ribosomal subunit. Contacts proteins S9 and S11.

One of the primary rRNA binding proteins, it binds directly to 16S rRNA where it nucleates assembly of the head domain of the 30S subunit. Is located at the subunit interface close to the decoding center, probably blocks exit of the E-site tRNA. This is Small ribosomal subunit protein uS7 from Hahella chejuensis (strain KCTC 2396).